A 168-amino-acid chain; its full sequence is Sensor histidine kinase component HK1 (168 aa).

The Histidine kinase; second part domain occupies 1-141 (MPITPLLHES…ELRITLPTPR (141 aa)). The interval 137-168 (LPTPRPPFHEELPRITSSDTKDPNREHDTSDQ) is disordered. A compositionally biased stretch (basic and acidic residues) spans 143–168 (PFHEELPRITSSDTKDPNREHDTSDQ).

As to quaternary structure, interacts with HK2.

It carries out the reaction ATP + protein L-histidine = ADP + protein N-phospho-L-histidine.. Member of the three-protein two-component system HK1/HK2/TcrA. Kinase that binds ATP and catalyzes the transfer of a phosphoryl group from ATP to HK2. The protein is Sensor histidine kinase component HK1 of Mycobacterium tuberculosis (strain ATCC 25618 / H37Rv).